The chain runs to 176 residues: Large ribosomal subunit protein eL6 (176 aa).

Residues 1-27 (MSQVAPKWYQSEDVPAPKQTRKTARPQ) are disordered.

The protein belongs to the eukaryotic ribosomal protein eL6 family. In terms of assembly, component of the large ribosomal subunit. Mature ribosomes consist of a small (40S) and a large (60S) subunit. The 40S subunit contains about 32 different proteins and 1 molecule of RNA (18S). The 60S subunit contains 45 different proteins and 3 molecules of RNA (25S, 5.8S and 5S).

The protein localises to the cytoplasm. Its function is as follows. Component of the ribosome, a large ribonucleoprotein complex responsible for the synthesis of proteins in the cell. The small ribosomal subunit (SSU) binds messenger RNAs (mRNAs) and translates the encoded message by selecting cognate aminoacyl-transfer RNA (tRNA) molecules. The large subunit (LSU) contains the ribosomal catalytic site termed the peptidyl transferase center (PTC), which catalyzes the formation of peptide bonds, thereby polymerizing the amino acids delivered by tRNAs into a polypeptide chain. The nascent polypeptides leave the ribosome through a tunnel in the LSU and interact with protein factors that function in enzymatic processing, targeting, and the membrane insertion of nascent chains at the exit of the ribosomal tunnel. The chain is Large ribosomal subunit protein eL6 from Candida albicans (strain SC5314 / ATCC MYA-2876) (Yeast).